The chain runs to 173 residues: Crossover junction endodeoxyribonuclease RuvC (173 aa).

Residues Asp-8, Glu-67, and Asp-139 contribute to the active site. Mg(2+) is bound by residues Asp-8, Glu-67, and Asp-139.

This sequence belongs to the RuvC family. As to quaternary structure, homodimer which binds Holliday junction (HJ) DNA. The HJ becomes 2-fold symmetrical on binding to RuvC with unstacked arms; it has a different conformation from HJ DNA in complex with RuvA. In the full resolvosome a probable DNA-RuvA(4)-RuvB(12)-RuvC(2) complex forms which resolves the HJ. It depends on Mg(2+) as a cofactor.

Its subcellular location is the cytoplasm. It carries out the reaction Endonucleolytic cleavage at a junction such as a reciprocal single-stranded crossover between two homologous DNA duplexes (Holliday junction).. Its function is as follows. The RuvA-RuvB-RuvC complex processes Holliday junction (HJ) DNA during genetic recombination and DNA repair. Endonuclease that resolves HJ intermediates. Cleaves cruciform DNA by making single-stranded nicks across the HJ at symmetrical positions within the homologous arms, yielding a 5'-phosphate and a 3'-hydroxyl group; requires a central core of homology in the junction. The consensus cleavage sequence is 5'-(A/T)TT(C/G)-3'. Cleavage occurs on the 3'-side of the TT dinucleotide at the point of strand exchange. HJ branch migration catalyzed by RuvA-RuvB allows RuvC to scan DNA until it finds its consensus sequence, where it cleaves and resolves the cruciform DNA. This Vibrio cholerae serotype O1 (strain ATCC 39541 / Classical Ogawa 395 / O395) protein is Crossover junction endodeoxyribonuclease RuvC.